A 642-amino-acid polypeptide reads, in one-letter code: Threonine--tRNA ligase (642 aa).

The TGS domain maps to 1–63 (MNDITVTLPD…YNDARVVIVT (63 aa)). Residues 242-533 (DHRKIGQELD…LIEHFNGKFP (292 aa)) are catalytic. 3 residues coordinate Zn(2+): Cys-334, His-385, and His-510.

It belongs to the class-II aminoacyl-tRNA synthetase family. In terms of assembly, homodimer. The cofactor is Zn(2+).

It localises to the cytoplasm. The catalysed reaction is tRNA(Thr) + L-threonine + ATP = L-threonyl-tRNA(Thr) + AMP + diphosphate + H(+). Its function is as follows. Catalyzes the attachment of threonine to tRNA(Thr) in a two-step reaction: L-threonine is first activated by ATP to form Thr-AMP and then transferred to the acceptor end of tRNA(Thr). The chain is Threonine--tRNA ligase from Haloquadratum walsbyi (strain DSM 16790 / HBSQ001).